Here is a 347-residue protein sequence, read N- to C-terminus: 3-isopropylmalate dehydrogenase (347 aa).

The substrate site is built by arginine 94, arginine 104, arginine 128, and aspartate 219. Aspartate 219, aspartate 243, and aspartate 247 together coordinate Mg(2+). 279-291 is an NAD(+) binding site; it reads GSAPDIAGQGKAD.

Belongs to the isocitrate and isopropylmalate dehydrogenases family. LeuB type 2 subfamily. As to quaternary structure, homodimer. It depends on Mg(2+) as a cofactor. Mn(2+) serves as cofactor.

It is found in the cytoplasm. The enzyme catalyses (2R,3S)-3-isopropylmalate + NAD(+) = 4-methyl-2-oxopentanoate + CO2 + NADH. The protein operates within amino-acid biosynthesis; L-leucine biosynthesis; L-leucine from 3-methyl-2-oxobutanoate: step 3/4. Catalyzes the oxidation of 3-carboxy-2-hydroxy-4-methylpentanoate (3-isopropylmalate) to 3-carboxy-4-methyl-2-oxopentanoate. The product decarboxylates to 4-methyl-2 oxopentanoate. In Streptomyces coelicolor (strain ATCC BAA-471 / A3(2) / M145), this protein is 3-isopropylmalate dehydrogenase.